The sequence spans 315 residues: Ribosome biogenesis protein BRX1 homolog 1 (315 aa).

The disordered stretch occupies residues Met1 to Lys35. The segment covering Ser19 to Lys35 has biased composition (basic and acidic residues). In terms of domain architecture, Brix spans Glu53–Gly256.

This sequence belongs to the BRX1 family. As to expression, expressed in roots, rosette leaves, stems, flowers, siliques and seeds.

Its subcellular location is the nucleus. It is found in the nucleolus. Functionally, involved in pre-rRNA processing and required for biogenesis of the large (60S) ribosomal subunit. Required for proper development. The polypeptide is Ribosome biogenesis protein BRX1 homolog 1 (Arabidopsis thaliana (Mouse-ear cress)).